The sequence spans 249 residues: tRNA pseudouridine synthase A (249 aa).

Asp52 (nucleophile) is an active-site residue. Tyr111 lines the substrate pocket.

Belongs to the tRNA pseudouridine synthase TruA family. Homodimer.

The catalysed reaction is uridine(38/39/40) in tRNA = pseudouridine(38/39/40) in tRNA. Functionally, formation of pseudouridine at positions 38, 39 and 40 in the anticodon stem and loop of transfer RNAs. The sequence is that of tRNA pseudouridine synthase A from Caulobacter sp. (strain K31).